Here is a 293-residue protein sequence, read N- to C-terminus: 4-hydroxy-tetrahydrodipicolinate synthase (293 aa).

Residue Thr-51 participates in pyruvate binding. Catalysis depends on Tyr-140, which acts as the Proton donor/acceptor. Lys-168 serves as the catalytic Schiff-base intermediate with substrate. Ile-209 contacts pyruvate.

This sequence belongs to the DapA family. As to quaternary structure, homotetramer; dimer of dimers.

It localises to the cytoplasm. The catalysed reaction is L-aspartate 4-semialdehyde + pyruvate = (2S,4S)-4-hydroxy-2,3,4,5-tetrahydrodipicolinate + H2O + H(+). It functions in the pathway amino-acid biosynthesis; L-lysine biosynthesis via DAP pathway; (S)-tetrahydrodipicolinate from L-aspartate: step 3/4. Its function is as follows. Catalyzes the condensation of (S)-aspartate-beta-semialdehyde [(S)-ASA] and pyruvate to 4-hydroxy-tetrahydrodipicolinate (HTPA). This Streptococcus mutans serotype c (strain ATCC 700610 / UA159) protein is 4-hydroxy-tetrahydrodipicolinate synthase.